The primary structure comprises 126 residues: Fluoride-specific ion channel FluC (126 aa).

The next 4 membrane-spanning stretches (helical) occupy residues 7-24 (LWVSLGGIVGACARYFLS), 35-55 (FPWGTLLINITGSFVLGLFLV), 69-89 (LLIAIGFCGAYTTFSSYAYES), and 98-118 (WGLFAGNVLANNILCLAAVLG). Residues G77 and T80 each coordinate Na(+).

This sequence belongs to the fluoride channel Fluc/FEX (TC 1.A.43) family.

Its subcellular location is the cell inner membrane. The catalysed reaction is fluoride(in) = fluoride(out). With respect to regulation, na(+) is not transported, but it plays an essential structural role and its presence is essential for fluoride channel function. Functionally, fluoride-specific ion channel. Important for reducing fluoride concentration in the cell, thus reducing its toxicity. This is Fluoride-specific ion channel FluC from Koribacter versatilis (strain Ellin345).